The chain runs to 224 residues: Cytidylate kinase (224 aa).

Residue 11–19 (GPAAAGKST) participates in ATP binding.

This sequence belongs to the cytidylate kinase family. Type 1 subfamily.

It is found in the cytoplasm. It catalyses the reaction CMP + ATP = CDP + ADP. The enzyme catalyses dCMP + ATP = dCDP + ADP. In Geobacillus sp. (strain WCH70), this protein is Cytidylate kinase.